The chain runs to 99 residues: Plastocyanin (99 aa).

The Plastocyanin-like domain occupies 1–99 (IEIKLGGDDG…AGMVGKVTVQ (99 aa)). 4 residues coordinate Cu cation: His-37, Cys-84, His-87, and Met-92.

The protein belongs to the plastocyanin family. Cu(2+) is required as a cofactor.

The protein resides in the plastid. Its subcellular location is the chloroplast thylakoid membrane. Functionally, participates in electron transfer between P700 and the cytochrome b6-f complex in photosystem I. The polypeptide is Plastocyanin (PETE) (Rumex obtusifolius (Bitter dock)).